The chain runs to 484 residues: Glutamyl-tRNA(Gln) amidotransferase subunit A (484 aa).

Catalysis depends on charge relay system residues Lys-76 and Ser-151. The active-site Acyl-ester intermediate is Ser-175.

Belongs to the amidase family. GatA subfamily. Heterotrimer of A, B and C subunits.

The catalysed reaction is L-glutamyl-tRNA(Gln) + L-glutamine + ATP + H2O = L-glutaminyl-tRNA(Gln) + L-glutamate + ADP + phosphate + H(+). Functionally, allows the formation of correctly charged Gln-tRNA(Gln) through the transamidation of misacylated Glu-tRNA(Gln) in organisms which lack glutaminyl-tRNA synthetase. The reaction takes place in the presence of glutamine and ATP through an activated gamma-phospho-Glu-tRNA(Gln). The sequence is that of Glutamyl-tRNA(Gln) amidotransferase subunit A from Alkalilimnicola ehrlichii (strain ATCC BAA-1101 / DSM 17681 / MLHE-1).